Consider the following 554-residue polypeptide: Folate synthesis bifunctional protein, mitochondrial (554 aa).

The N-terminal 42 residues, 1 to 42, are a transit peptide targeting the mitochondrion; that stretch reads MAPLLSQTLIHTGRFLLRRFLEPPPAVISAVAASRVCFHRYY. Residues 90–215 form an HPPK region; sequence VIALGSNIGN…SFVLAPLVDL (126 aa). The 269-residue stretch at 273–541 folds into the Pterin-binding domain; the sequence is THVMGILNLT…NVRHNADAAK (269 aa). Residues 275–554 form a DHPS region; it reads VMGILNLTPD…AMLRRRRSKG (280 aa). A Mg(2+)-binding site is contributed by Asn-280. Residues Thr-320, Asp-357, Asn-376, Asp-449, Lys-494, and 529-531 each bind (7,8-dihydropterin-6-yl)methyl diphosphate; that span reads RVH.

It in the N-terminal section; belongs to the HPPK family. The protein in the C-terminal section; belongs to the DHPS family. Mg(2+) is required as a cofactor. Ubiquitous.

Its subcellular location is the mitochondrion. It catalyses the reaction 6-hydroxymethyl-7,8-dihydropterin + ATP = (7,8-dihydropterin-6-yl)methyl diphosphate + AMP + H(+). The enzyme catalyses (7,8-dihydropterin-6-yl)methyl diphosphate + 4-aminobenzoate = 7,8-dihydropteroate + diphosphate. It functions in the pathway cofactor biosynthesis; tetrahydrofolate biosynthesis; 2-amino-4-hydroxy-6-hydroxymethyl-7,8-dihydropteridine diphosphate from 7,8-dihydroneopterin triphosphate: step 4/4. It participates in cofactor biosynthesis; tetrahydrofolate biosynthesis; 7,8-dihydrofolate from 2-amino-4-hydroxy-6-hydroxymethyl-7,8-dihydropteridine diphosphate and 4-aminobenzoate: step 1/2. Its function is as follows. Catalyzes the first two consecutive steps of tetrahydrofolate biosynthesis. This is Folate synthesis bifunctional protein, mitochondrial from Arabidopsis thaliana (Mouse-ear cress).